The chain runs to 274 residues: Thiamine kinase (274 aa).

It belongs to the thiamine kinase family.

The enzyme catalyses thiamine + ATP = thiamine phosphate + ADP + H(+). The protein operates within cofactor biosynthesis; thiamine diphosphate biosynthesis; thiamine phosphate from thiamine: step 1/1. In terms of biological role, catalyzes the ATP-dependent phosphorylation of thiamine to thiamine phosphate. Is involved in thiamine salvage. The chain is Thiamine kinase from Escherichia coli O17:K52:H18 (strain UMN026 / ExPEC).